A 646-amino-acid polypeptide reads, in one-letter code: Lipoteichoic acid synthase (646 aa).

The Cytoplasmic segment spans residues 1–7 (MKLHKKK). Residues 8–28 (LTLFAFFILTVLTVTLKTYFS) traverse the membrane as a helical segment. Residues 29-43 (YYVDFSLGVKGLVQN) are Extracellular-facing. Residues 44–64 (LILLMNPYSLIALVLSIFLFF) form a helical membrane-spanning segment. Topologically, residues 65 to 68 (KGKK) are cytoplasmic. The chain crosses the membrane as a helical span at residues 69-89 (AFWFIFIGGFILTFLLYANVV). The Extracellular segment spans residues 90 to 119 (YFRFFSDFLTFSTLNQAGNVESMGGAVTAS). The chain crosses the membrane as a helical span at residues 120–140 (FKWYDFVYFIDTIIYLFVLIF). Topologically, residues 141-153 (KQKWLDKRVFSKK) are cytoplasmic. The chain crosses the membrane as a helical span at residues 154-174 (FVPVVMAASIALFFLNLAFAE). Topologically, residues 175 to 646 (SDRPELLTRT…KTGPKGQERK (472 aa)) are extracellular. Residues E255 and T300 each contribute to the Mn(2+) site. T300 is a catalytic residue. A substrate-binding site is contributed by H416. Mn(2+)-binding residues include D475 and H476. Residues 579–646 (IYDNKNNEPM…KTGPKGQERK (68 aa)) are disordered. Composition is skewed to basic and acidic residues over residues 580-607 (YDNKNNEPMTEKPKDFEKRKQQSEKDLQ) and 625-646 (DFDKIKPSEYEYKTGPKGQERK).

The protein belongs to the LTA synthase family. In terms of processing, proteolytically cleaved.

It localises to the cell membrane. The protein localises to the secreted. It functions in the pathway cell wall biogenesis; lipoteichoic acid biosynthesis. Catalyzes the polymerization of lipoteichoic acid (LTA) polyglycerol phosphate, a reaction that presumably uses phosphatidylglycerol (PG) as substrate. Is required for staphylococcal growth and cell division process. This Staphylococcus saprophyticus subsp. saprophyticus (strain ATCC 15305 / DSM 20229 / NCIMB 8711 / NCTC 7292 / S-41) protein is Lipoteichoic acid synthase (ltaS).